A 178-amino-acid polypeptide reads, in one-letter code: Arginine repressor (178 aa).

The segment at M1–A20 is disordered.

This sequence belongs to the ArgR family.

It is found in the cytoplasm. Its pathway is amino-acid biosynthesis; L-arginine biosynthesis [regulation]. Functionally, regulates arginine biosynthesis genes. This Streptomyces griseus subsp. griseus (strain JCM 4626 / CBS 651.72 / NBRC 13350 / KCC S-0626 / ISP 5235) protein is Arginine repressor.